The primary structure comprises 363 residues: Chorismate synthase (363 aa).

Residues R48 and R54 each coordinate NADP(+). FMN is bound by residues 125–127 (RSS), 238–239 (NA), G278, 293–297 (KPTSS), and R319.

Belongs to the chorismate synthase family. Homotetramer. Requires FMNH2 as cofactor.

The catalysed reaction is 5-O-(1-carboxyvinyl)-3-phosphoshikimate = chorismate + phosphate. It functions in the pathway metabolic intermediate biosynthesis; chorismate biosynthesis; chorismate from D-erythrose 4-phosphate and phosphoenolpyruvate: step 7/7. Functionally, catalyzes the anti-1,4-elimination of the C-3 phosphate and the C-6 proR hydrogen from 5-enolpyruvylshikimate-3-phosphate (EPSP) to yield chorismate, which is the branch point compound that serves as the starting substrate for the three terminal pathways of aromatic amino acid biosynthesis. This reaction introduces a second double bond into the aromatic ring system. The sequence is that of Chorismate synthase from Alcanivorax borkumensis (strain ATCC 700651 / DSM 11573 / NCIMB 13689 / SK2).